The primary structure comprises 176 residues: Ribosome maturation factor RimM (176 aa).

Residues 97 to 176 (DSEFYHRDLI…QILVDWDPDF (80 aa)) form the PRC barrel domain.

The protein belongs to the RimM family. As to quaternary structure, binds ribosomal protein uS19.

It localises to the cytoplasm. Functionally, an accessory protein needed during the final step in the assembly of 30S ribosomal subunit, possibly for assembly of the head region. Essential for efficient processing of 16S rRNA. May be needed both before and after RbfA during the maturation of 16S rRNA. It has affinity for free ribosomal 30S subunits but not for 70S ribosomes. This is Ribosome maturation factor RimM from Shewanella frigidimarina (strain NCIMB 400).